Consider the following 547-residue polypeptide: Probable high-affinity hexose transporter ght8, mitochondrial (547 aa).

A mitochondrion-targeting transit peptide spans 1-21 (MGKTLTIVMLVFVSMAGWMFG). The Mitochondrial intermembrane portion of the chain corresponds to 22–86 (ADTGSIGGIT…SPLMDRIGKR (65 aa)). A helical membrane pass occupies residues 87-107 (VSIMFWTIVYLIGIILQVTAV). Residues 108–112 (PSWVQ) lie on the Cytoplasmic side of the membrane. The helical transmembrane segment at 113-133 (IMVAKIWTGLAIGALSVLAPG) threads the bilayer. The Mitochondrial intermembrane segment spans residues 134 to 144 (FQSEVAPATLR). Residues 145–165 (GTIVTTYQLAVTGGIFIAACI) traverse the membrane as a helical segment. Topologically, residues 166-179 (NMGTHKLHKTAQWR) are cytoplasmic. Residues 180–200 (VSMGINLLWGIIMFIGISFLP) traverse the membrane as a helical segment. Residues 201-304 (ESPRYLIAIG…TGMNSPYLSA (104 aa)) are Mitochondrial intermembrane-facing. A helical transmembrane segment spans residues 305-325 (LILDAVNFGCTFGGLFVLEFF). Residues 326–328 (GRR) are Cytoplasmic-facing. A helical transmembrane segment spans residues 329–349 (MPLIIGGVWQSITFFIYAAVG). The Mitochondrial intermembrane segment spans residues 350 to 363 (NRALTRKNGTSNHR). Residues 364–384 (AGAVMIVFSCLFIFSFAQTWG) traverse the membrane as a helical segment. At 385 to 404 (PAAYVIVGESYPIRYRSKCA) the chain is on the cytoplasmic side. The chain crosses the membrane as a helical span at residues 405 to 425 (AVATTGNWLWGFLITFFTPFI). Residues 426–432 (SDSIGFK) lie on the Mitochondrial intermembrane side of the membrane. Residues 433-453 (YGYIFAACNLCAACIIFLFAH) traverse the membrane as a helical segment. Topologically, residues 454–547 (ETKGLTLEEI…NYVDEQDRYA (94 aa)) are cytoplasmic. Positions 482-547 (GQAAKQQQEV…NYVDEQDRYA (66 aa)) are disordered. Over residues 517–529 (TSSNDITSSTSSS) the composition is skewed to low complexity. Residue Ser-519 is modified to Phosphoserine. 2 positions are modified to phosphothreonine: Thr-523 and Thr-526. Ser-527, Ser-528, Ser-529, and Ser-537 each carry phosphoserine.

It belongs to the major facilitator superfamily. Sugar transporter (TC 2.A.1.1) family.

The protein localises to the mitochondrion membrane. The protein is Probable high-affinity hexose transporter ght8, mitochondrial (ght8) of Schizosaccharomyces pombe (strain 972 / ATCC 24843) (Fission yeast).